We begin with the raw amino-acid sequence, 274 residues long: Acyl-[acyl-carrier-protein]--UDP-N-acetylglucosamine O-acyltransferase (274 aa).

This sequence belongs to the transferase hexapeptide repeat family. LpxA subfamily. In terms of assembly, homotrimer.

It is found in the cytoplasm. The catalysed reaction is a (3R)-hydroxyacyl-[ACP] + UDP-N-acetyl-alpha-D-glucosamine = a UDP-3-O-[(3R)-3-hydroxyacyl]-N-acetyl-alpha-D-glucosamine + holo-[ACP]. It participates in glycolipid biosynthesis; lipid IV(A) biosynthesis; lipid IV(A) from (3R)-3-hydroxytetradecanoyl-[acyl-carrier-protein] and UDP-N-acetyl-alpha-D-glucosamine: step 1/6. In terms of biological role, involved in the biosynthesis of lipid A, a phosphorylated glycolipid that anchors the lipopolysaccharide to the outer membrane of the cell. In Bartonella bacilliformis (strain ATCC 35685 / KC583 / Herrer 020/F12,63), this protein is Acyl-[acyl-carrier-protein]--UDP-N-acetylglucosamine O-acyltransferase.